The primary structure comprises 272 residues: TIP41-like protein (272 aa).

At Lys106 the chain carries N6-acetyllysine. Residues 173–272 (RVMPSSFFLL…ADSQKSTQVE (100 aa)) are interaction with PPP2CA. The residue at position 265 (Ser265) is a Phosphoserine.

The protein belongs to the TIP41 family. In terms of assembly, isoform 1 interacts with PPP2CA. Isoform 2 does not interact with PPP2CA. Interacts with PPP2CB, PPP4C and PPP6C. Interacts with IGBP1; the interaction is dependent on PPP2CA. Associates with a protein phosphatase 2A PP2A(C):IGBP1 complex. Interacts with PPP4C and PPP4R2.

Its subcellular location is the cytoplasm. May be a allosteric regulator of serine/threonine-protein phosphatase 2A (PP2A). Isoform 1 inhibits catalytic activity of the PP2A(D) core complex in vitro. The PP2A(C):TIPRL complex does not show phosphatase activity. Acts as a negative regulator of serine/threonine-protein phosphatase 4 probably by inhibiting the formation of the active PPP4C:PPP4R2 complex; the function is proposed to implicate it in DNA damage response by promoting H2AX phosphorylated on Ser-140 (gamma-H2AX). May play a role in the regulation of ATM/ATR signaling pathway controlling DNA replication and repair. The chain is TIP41-like protein (TIPRL) from Homo sapiens (Human).